The primary structure comprises 466 residues: ATP synthase subunit beta (466 aa).

156–163 (GGAGVGKT) is a binding site for ATP.

The protein belongs to the ATPase alpha/beta chains family. In terms of assembly, F-type ATPases have 2 components, CF(1) - the catalytic core - and CF(0) - the membrane proton channel. CF(1) has five subunits: alpha(3), beta(3), gamma(1), delta(1), epsilon(1). CF(0) has three main subunits: a(1), b(2) and c(9-12). The alpha and beta chains form an alternating ring which encloses part of the gamma chain. CF(1) is attached to CF(0) by a central stalk formed by the gamma and epsilon chains, while a peripheral stalk is formed by the delta and b chains.

Its subcellular location is the cell inner membrane. The catalysed reaction is ATP + H2O + 4 H(+)(in) = ADP + phosphate + 5 H(+)(out). In terms of biological role, produces ATP from ADP in the presence of a proton gradient across the membrane. The catalytic sites are hosted primarily by the beta subunits. The sequence is that of ATP synthase subunit beta from Polynucleobacter necessarius subsp. necessarius (strain STIR1).